Here is a 502-residue protein sequence, read N- to C-terminus: Keratin, type II cytoskeletal 8 (502 aa).

The interval 1–98 (MSVRSTKVTY…DPSIQQVRTE (98 aa)) is head. Residues S13, S26, S37, and S40 each carry the phosphoserine modification. Residues 99–134 (EKEQIKTLNNKFASFIDKVRFLEQQNKMLETKWNLL) are coil 1A. An IF rod domain is found at 99 to 410 (EKEQIKTLNN…KLLEGEESRL (312 aa)). The interval 135 to 151 (QNQKTTRSNMDGMFEAY) is linker 1. The interval 152–243 (ISNLRRQLDG…QLYEEELREM (92 aa)) is coil 1B. Positions 244-267 (QSQISDTSVVLSMDNNRSLDLDGI) are linker 12. The tract at residues 268–406 (IAEVRAQYED…ATYRKLLEGE (139 aa)) is coil 2. The tract at residues 269–390 (AEVRAQYEDV…DYQELMNVKL (122 aa)) is necessary for interaction with PNN. Positions 407–502 (ESRLESGFQN…SESSDVFSKP (96 aa)) are tail. 4 positions are modified to phosphoserine: S425, S428, S436, and S444.

Belongs to the intermediate filament family. As to quaternary structure, heterotetramer of two type I and two type II keratins. Keratin-8 associates with keratin-18. Expressed in oocytes, eggs, embryos, liver and intestinal mucosa.

Its subcellular location is the cytoplasm. The protein localises to the nucleus. The protein resides in the nucleoplasm. It localises to the nucleus matrix. Together with KRT19, helps to link the contractile apparatus to dystrophin at the costameres of striated muscle. The polypeptide is Keratin, type II cytoskeletal 8 (Xenopus laevis (African clawed frog)).